The chain runs to 155 residues: SsrA-binding protein (155 aa).

Belongs to the SmpB family.

Its subcellular location is the cytoplasm. In terms of biological role, required for rescue of stalled ribosomes mediated by trans-translation. Binds to transfer-messenger RNA (tmRNA), required for stable association of tmRNA with ribosomes. tmRNA and SmpB together mimic tRNA shape, replacing the anticodon stem-loop with SmpB. tmRNA is encoded by the ssrA gene; the 2 termini fold to resemble tRNA(Ala) and it encodes a 'tag peptide', a short internal open reading frame. During trans-translation Ala-aminoacylated tmRNA acts like a tRNA, entering the A-site of stalled ribosomes, displacing the stalled mRNA. The ribosome then switches to translate the ORF on the tmRNA; the nascent peptide is terminated with the 'tag peptide' encoded by the tmRNA and targeted for degradation. The ribosome is freed to recommence translation, which seems to be the essential function of trans-translation. In Streptococcus pneumoniae (strain P1031), this protein is SsrA-binding protein.